The chain runs to 901 residues: Aconitate hydratase A (901 aa).

Cysteine 443, cysteine 509, and cysteine 512 together coordinate [4Fe-4S] cluster.

The protein belongs to the aconitase/IPM isomerase family. Monomer. The cofactor is [4Fe-4S] cluster.

The catalysed reaction is citrate = D-threo-isocitrate. The enzyme catalyses (2S,3R)-3-hydroxybutane-1,2,3-tricarboxylate = 2-methyl-cis-aconitate + H2O. The protein operates within carbohydrate metabolism; tricarboxylic acid cycle; isocitrate from oxaloacetate: step 2/2. Its pathway is organic acid metabolism; propanoate degradation. In terms of biological role, involved in the catabolism of short chain fatty acids (SCFA) via the tricarboxylic acid (TCA)(acetyl degradation route) and probably the 2-methylcitrate cycle I (propionate degradation route). Catalyzes the reversible isomerization of citrate to isocitrate via cis-aconitate. Could catalyze the hydration of 2-methyl-cis-aconitate to yield (2R,3S)-2-methylisocitrate. The apo form of AcnA functions as a RNA-binding regulatory protein. This is Aconitate hydratase A (acnA) from Staphylococcus epidermidis (strain ATCC 35984 / DSM 28319 / BCRC 17069 / CCUG 31568 / BM 3577 / RP62A).